We begin with the raw amino-acid sequence, 406 residues long: Synaptic vesicle membrane protein VAT-1 homolog (406 aa).

The segment at 1–57 (MSAEREAAEAATVAAATEAGAETGTGAGEGAPSQPPTVEVASDPQPPPAPEASASAS) is disordered. Ser-2 is subject to N-acetylserine. Ser-2 bears the Phosphoserine mark. A compositionally biased stretch (low complexity) spans 9-22 (EAATVAAATEAGAE). A phosphoserine mark is found at Ser-33 and Ser-42.

Belongs to the zinc-containing alcohol dehydrogenase family. Quinone oxidoreductase subfamily.

Its subcellular location is the cytoplasm. It is found in the mitochondrion outer membrane. Its function is as follows. Plays a part in calcium-regulated keratinocyte activation in epidermal repair mechanisms. Has no effect on cell proliferation. Possesses ATPase activity. Negatively regulates mitochondrial fusion in cooperation with mitofusin proteins (MFN1-2). The protein is Synaptic vesicle membrane protein VAT-1 homolog (Vat1) of Mus musculus (Mouse).